Reading from the N-terminus, the 99-residue chain is Integration host factor subunit alpha (99 aa).

The disordered stretch occupies residues 49–71 (FGNFDLRDKNQRPGRNPKTGEDI).

It belongs to the bacterial histone-like protein family. Heterodimer of an alpha and a beta chain.

This protein is one of the two subunits of integration host factor, a specific DNA-binding protein that functions in genetic recombination as well as in transcriptional and translational control. This is Integration host factor subunit alpha from Shewanella denitrificans (strain OS217 / ATCC BAA-1090 / DSM 15013).